The primary structure comprises 329 residues: Flotillin-like protein FloA (329 aa).

Helical transmembrane passes span 6–26 and 27–47; these read FIVIAVIIVVALLILFSFVPI and GLWISALAAGVHVGIGTLVGM.

This sequence belongs to the flotillin-like FloA family. As to quaternary structure, homooligomerizes.

It is found in the cell membrane. The protein localises to the membrane raft. In terms of biological role, found in functional membrane microdomains (FMM) that may be equivalent to eukaryotic membrane rafts. FMMs are highly dynamic and increase in number as cells age. Flotillins are thought to be important factors in membrane fluidity. This Staphylococcus aureus (strain USA300) protein is Flotillin-like protein FloA.